The sequence spans 297 residues: HTH-type transcriptional regulator ArgP (297 aa).

The HTH lysR-type domain maps to 4-60 (PDYRTLQALDAVIRERGFERAAQKLCITQSAVSQRIKQLENTFGQPLLVRTVPPRPT). Positions 21-40 (FERAAQKLCITQSAVSQRIK) form a DNA-binding region, H-T-H motif.

It belongs to the LysR transcriptional regulatory family. In terms of assembly, homodimer.

Its function is as follows. Controls the transcription of genes involved in arginine and lysine metabolism. This is HTH-type transcriptional regulator ArgP from Cronobacter sakazakii (strain ATCC BAA-894) (Enterobacter sakazakii).